The following is a 272-amino-acid chain: Putative pyruvate, phosphate dikinase regulatory protein (272 aa).

An ADP-binding site is contributed by 151-158 (GISRTSKT).

This sequence belongs to the pyruvate, phosphate/water dikinase regulatory protein family. PDRP subfamily.

It carries out the reaction N(tele)-phospho-L-histidyl/L-threonyl-[pyruvate, phosphate dikinase] + ADP = N(tele)-phospho-L-histidyl/O-phospho-L-threonyl-[pyruvate, phosphate dikinase] + AMP + H(+). The catalysed reaction is N(tele)-phospho-L-histidyl/O-phospho-L-threonyl-[pyruvate, phosphate dikinase] + phosphate + H(+) = N(tele)-phospho-L-histidyl/L-threonyl-[pyruvate, phosphate dikinase] + diphosphate. Bifunctional serine/threonine kinase and phosphorylase involved in the regulation of the pyruvate, phosphate dikinase (PPDK) by catalyzing its phosphorylation/dephosphorylation. The protein is Putative pyruvate, phosphate dikinase regulatory protein of Staphylococcus aureus (strain Mu3 / ATCC 700698).